A 307-amino-acid chain; its full sequence is Probable RuBisCO transcriptional regulator (307 aa).

An HTH lysR-type domain is found at 4-61; that stretch reads FTLQQLRILKAVATEKNFTKAAELLYLSQPSLSKQIKTLEKNLDILLVNRENNKISLT. The segment at residues 21–40 is a DNA-binding region (H-T-H motif); that stretch reads FTKAAELLYLSQPSLSKQIK.

Belongs to the LysR transcriptional regulatory family.

It localises to the plastid. It is found in the chloroplast. Functionally, trans-acting transcriptional regulator of RuBisCO genes (rbcL and rbcS) expression. This is Probable RuBisCO transcriptional regulator (rbcR) from Phaeodactylum tricornutum (strain CCAP 1055/1).